Reading from the N-terminus, the 201-residue chain is MNPEYDYLFKLLLIGDSGVGKSCLLLRFADDTYTESYISTIGVDFKIRTIELDGKTIKLQIWDTAGQERGRTITSSYYRGAHGIIVVYDVTDQESYANVKQWLQEIDRYASENVNKLLVGNKSDLTTKKVVDNTTAKEFADSLGIPFLETSAKNATNVEQAFMTMAAEIKKRMGPGAASGGERPNLKIDSTPVKQAGGGCC.

Met1 bears the N-acetylmethionine mark. The GTP site is built by Ser17, Gly18, Val19, Gly20, Lys21, Ser22, Cys23, Tyr33, Thr34, Glu35, Ser36, Ser39, and Thr40. Position 22 (Ser22) interacts with Mg(2+). Residues 30–45 carry the Switch 1 motif; the sequence is DDTYTESYISTIGVDF. Mg(2+)-binding residues include Thr40 and Asp63. Positions 64-83 are switch 2 region; required for interaction with REP1/CHM; that stretch reads TAGQERGRTITSSYYRGAHG. Positions 65–80 match the Switch 2 motif; the sequence is AGQERGRTITSSYYRG. Residues Gly66, Asn121, Lys122, Asp124, Ser151, Ala152, and Lys153 each contribute to the GTP site. The tract at residues 173 to 201 is disordered; it reads MGPGAASGGERPNLKIDSTPVKQAGGGCC. 2 S-geranylgeranyl cysteine lipidation sites follow: Cys200 and Cys201. At Cys201 the chain carries Cysteine methyl ester.

Belongs to the small GTPase superfamily. Rab family. In terms of assembly, interacts with MICAL1 and MICAL2. Interacts (in GTP-bound form) with MICALCL, MICAL1 and MILCAL3. Interacts with GDI1; the interaction requires the GDP-bound state. Interacts with CHM/REP1; the interaction requires the GDP-bound form and is necessary for prenylation by GGTase II. Interacts with RabGAP TBC1D20. Interacts (in GDP-bound form) with lipid phosphatase MTMR6 (via GRAM domain); the interaction regulates MTMR6 recruitment to the endoplasmic reticulum-Golgi intermediate compartment. Interacts (in GDP-bound form) with lipid phosphatase MTMR7. The cofactor is Mg(2+). Post-translationally, prenylated; by GGTase II, only after interaction of the substrate with Rab escort protein 1 (REP1).

It is found in the cytoplasm. It localises to the membrane. The protein resides in the preautophagosomal structure membrane. Its subcellular location is the perinuclear region. It carries out the reaction GTP + H2O = GDP + phosphate + H(+). Its activity is regulated as follows. Regulated by guanine nucleotide exchange factors (GEFs) which promote the exchange of bound GDP for free GTP. Regulated by GTPase activating proteins (GAPs) including TBC1D20 which increases the GTP hydrolysis activity. Inhibited by GDP dissociation inhibitors (GDIs). Its function is as follows. The small GTPases Rab are key regulators of intracellular membrane trafficking, from the formation of transport vesicles to their fusion with membranes. Rabs cycle between an inactive GDP-bound form and an active GTP-bound form that is able to recruit to membranes different set of downstream effectors directly responsible for vesicle formation, movement, tethering and fusion. Plays a role in the initial events of the autophagic vacuole development which take place at specialized regions of the endoplasmic reticulum. Regulates vesicular transport between the endoplasmic reticulum and successive Golgi compartments. Required to modulate the compacted morphology of the Golgi. Promotes the recruitment of lipid phosphatase MTMR6 to the endoplasmic reticulum-Golgi intermediate compartment. The chain is Ras-related protein Rab-1B (RAB1B) from Sus scrofa (Pig).